A 188-amino-acid polypeptide reads, in one-letter code: Putative pre-16S rRNA nuclease (188 aa).

The segment at His-144–Gly-188 is disordered. Residues Lys-154–Gly-163 are compositionally biased toward basic residues.

Belongs to the YqgF nuclease family.

It is found in the cytoplasm. Functionally, could be a nuclease involved in processing of the 5'-end of pre-16S rRNA. This chain is Putative pre-16S rRNA nuclease, found in Kineococcus radiotolerans (strain ATCC BAA-149 / DSM 14245 / SRS30216).